We begin with the raw amino-acid sequence, 84 residues long: Toxin To10 (84 aa).

A signal peptide spans 1–19 (MNYSTLIAVASLLTAGTES). One can recognise an LCN-type CS-alpha/beta domain in the interval 21-80 (KDGYPVEGSCAFPCGYDNAYCDKLCKERKADSGYCYWVNILCYCYGLPDNAAIKGYGRCK). Disulfide bonds link Cys30–Cys79, Cys34–Cys55, Cys41–Cys62, and Cys45–Cys64. Pro81 carries the proline amide modification.

This sequence belongs to the long (4 C-C) scorpion toxin superfamily. Sodium channel inhibitor family. Alpha subfamily. As to expression, expressed by the venom gland.

It localises to the secreted. Functionally, alpha toxins bind voltage-independently at site-3 of sodium channels (Nav) and inhibit the inactivation of the activated channels, thereby blocking neuronal transmission. The chain is Toxin To10 from Tityus obscurus (Amazonian scorpion).